A 177-amino-acid chain; its full sequence is Large ribosomal subunit protein eL20 (177 aa).

Belongs to the eukaryotic ribosomal protein eL20 family.

The polypeptide is Large ribosomal subunit protein eL20 (RpL18A) (Spodoptera frugiperda (Fall armyworm)).